A 489-amino-acid chain; its full sequence is Glutamyl-tRNA(Gln) amidotransferase subunit A (489 aa).

Catalysis depends on charge relay system residues K75 and S150. Catalysis depends on S174, which acts as the Acyl-ester intermediate.

Belongs to the amidase family. GatA subfamily. Heterotrimer of A, B and C subunits.

It carries out the reaction L-glutamyl-tRNA(Gln) + L-glutamine + ATP + H2O = L-glutaminyl-tRNA(Gln) + L-glutamate + ADP + phosphate + H(+). Its function is as follows. Allows the formation of correctly charged Gln-tRNA(Gln) through the transamidation of misacylated Glu-tRNA(Gln) in organisms which lack glutaminyl-tRNA synthetase. The reaction takes place in the presence of glutamine and ATP through an activated gamma-phospho-Glu-tRNA(Gln). This Gloeobacter violaceus (strain ATCC 29082 / PCC 7421) protein is Glutamyl-tRNA(Gln) amidotransferase subunit A.